The sequence spans 124 residues: MQYQGRSKRSKTGARLRPRSKKSKSELGREPTETTVGEPRFRTVDVRGDAEKVRVLSTNVVNVATDSGAERATIEDVSANDANPNYARRNIITKGAIIETDAGTARVTSRPGQDGQVNATRVDE.

Positions 1–22 are enriched in basic residues; sequence MQYQGRSKRSKTGARLRPRSKK. Disordered stretches follow at residues 1–40 and 102–124; these read MQYQGRSKRSKTGARLRPRSKKSKSELGREPTETTVGEPR and AGTARVTSRPGQDGQVNATRVDE. The segment covering 23–32 has biased composition (basic and acidic residues); it reads SKSELGREPT. A compositionally biased stretch (polar residues) spans 106–124; it reads RVTSRPGQDGQVNATRVDE.

Belongs to the eukaryotic ribosomal protein eS8 family. Part of the 30S ribosomal subunit.

This is Small ribosomal subunit protein eS8 from Halobacterium salinarum (strain ATCC 29341 / DSM 671 / R1).